The sequence spans 94 residues: FXYD domain-containing ion transport regulator 6 (94 aa).

An N-terminal signal peptide occupies residues 1-17; it reads METVLVLCSLLAPVVLA. The Extracellular portion of the chain corresponds to 18 to 34; sequence SAAEKEKEKDPFYYDYQ. The helical transmembrane segment at 35 to 57 threads the bilayer; sequence TLRIGGLVFAVVLFSVGILLILS. Topologically, residues 58–94 are cytoplasmic; the sequence is RRCKCSFNQKPRAPGDEEAQVENLITTNAAEPQKAEN.

It belongs to the FXYD family. In terms of assembly, regulatory subunit of the sodium/potassium-transporting ATPase which is composed of a catalytic alpha subunit, a non-catalytic beta subunit and an additional regulatory subunit. The regulatory subunit, a member of the FXYD protein family, modulates the enzymatic activity in a tissue- and isoform-specific way by changing affinities of the Na+/K+-ATPase toward Na(+), K(+) or ATP.

It localises to the cell membrane. Associates with and regulates the activity of the sodium/potassium-transporting ATPase (NKA) which catalyzes the hydrolysis of ATP coupled with the exchange of Na(+) and K(+) ions across the plasma membrane. Reduces the apparent affinity for intracellular Na(+) with no change in the apparent affinity for extracellular K(+). In addition to modulating NKA kinetics, may also function as a regulator of NKA localization to the plasma membrane. This Mus musculus (Mouse) protein is FXYD domain-containing ion transport regulator 6 (Fxyd6).